A 258-amino-acid polypeptide reads, in one-letter code: MKKTIVFKCGGSVIRELSADFFQNVKELMQSGWNIAVVHGGGPDISKMLKTLQIETEFVDGQRKTTKPVLETAEMVLSGTINKFFVTELAKNGLKAAGISGKDGGLLQASYLNQDKYGEVGEIQKTDPSIIHALMKEGIIPVIAPLSMTSDFETLNVNADAAASAVASALHADKLLFVTDVEGIMDGESRLDTLTPQEIQALIDDGVISGGMIPKVNSALSALSEDVEEVMIVNGKGAFFTDQAFQGTKIVKEKESVS.

Substrate contacts are provided by residues 41 to 42 (GG), R63, and N156.

The protein belongs to the acetylglutamate kinase family. ArgB subfamily.

Its subcellular location is the cytoplasm. The catalysed reaction is N-acetyl-L-glutamate + ATP = N-acetyl-L-glutamyl 5-phosphate + ADP. The protein operates within amino-acid biosynthesis; L-arginine biosynthesis; N(2)-acetyl-L-ornithine from L-glutamate: step 2/4. Its function is as follows. Catalyzes the ATP-dependent phosphorylation of N-acetyl-L-glutamate. This is Acetylglutamate kinase from Bacillus velezensis (strain DSM 23117 / BGSC 10A6 / LMG 26770 / FZB42) (Bacillus amyloliquefaciens subsp. plantarum).